A 314-amino-acid chain; its full sequence is Olfactory receptor 5G29 (314 aa).

Residues 1-25 (MEEKNQTIVMEFFFLGLTDHLYQKI) are Extracellular-facing. Residue Asn5 is glycosylated (N-linked (GlcNAc...) asparagine). A helical membrane pass occupies residues 26-46 (ALFITILFVYLVTLGGNLGMI). Residues 47–54 (TLIWADPR) are Cytoplasmic-facing. Residues 55–75 (LHTPMYFFLSHLSFVDMCSSS) traverse the membrane as a helical segment. At 76–99 (SIAPKMLCDIFAEEKRISFMGCAA) the chain is on the extracellular side. Cys97 and Cys189 form a disulfide bridge. A helical transmembrane segment spans residues 100–120 (QMWFFGFFVGTECFLLASMAY). The Cytoplasmic portion of the chain corresponds to 121-133 (DRYTAICKPLLYT). Residues 134 to 154 (LLMSQRVCVHLVVGPYVFAII) form a helical membrane-spanning segment. Residues 155 to 196 (NITTHTTLAFCLPFCGSNTINHFFCDVSPLLSLACADSWVNK) are Extracellular-facing. A helical membrane pass occupies residues 197–217 (VVLFVLSGAIGVFSGLIIIVS). Residues 218–237 (YVSILMTIFKIQTADGKQKA) are Cytoplasmic-facing. Residues 238–258 (FSTCSSHLSAVSILYGTLFFI) traverse the membrane as a helical segment. At 259–271 (YVRPSASFSLNIN) the chain is on the extracellular side. The chain crosses the membrane as a helical span at residues 272–292 (KMISLFYTVVIPMLNPLIYSL). Over 293–312 (RNKEVKGAFRRKVQKKHFPA) the chain is Cytoplasmic.

Belongs to the G-protein coupled receptor 1 family.

It is found in the cell membrane. Potential odorant receptor. The chain is Olfactory receptor 5G29 from Mus musculus (Mouse).